Consider the following 112-residue polypeptide: Putative pterin-4-alpha-carbinolamine dehydratase (112 aa).

The protein belongs to the pterin-4-alpha-carbinolamine dehydratase family.

It carries out the reaction (4aS,6R)-4a-hydroxy-L-erythro-5,6,7,8-tetrahydrobiopterin = (6R)-L-erythro-6,7-dihydrobiopterin + H2O. The chain is Putative pterin-4-alpha-carbinolamine dehydratase from Shewanella piezotolerans (strain WP3 / JCM 13877).